Here is a 237-residue protein sequence, read N- to C-terminus: Sugar fermentation stimulation protein homolog (237 aa).

The protein belongs to the SfsA family.

In Azorhizobium caulinodans (strain ATCC 43989 / DSM 5975 / JCM 20966 / LMG 6465 / NBRC 14845 / NCIMB 13405 / ORS 571), this protein is Sugar fermentation stimulation protein homolog.